Consider the following 144-residue polypeptide: Ribosome-binding factor A (144 aa).

Disordered regions lie at residues 1–22 (MPRH…QLRV) and 125–144 (TPAV…EEEQ). Residues 134–144 (QDPDSDREEEQ) show a composition bias toward acidic residues.

It belongs to the RbfA family. In terms of assembly, monomer. Binds 30S ribosomal subunits, but not 50S ribosomal subunits or 70S ribosomes.

It is found in the cytoplasm. Its function is as follows. One of several proteins that assist in the late maturation steps of the functional core of the 30S ribosomal subunit. Associates with free 30S ribosomal subunits (but not with 30S subunits that are part of 70S ribosomes or polysomes). Required for efficient processing of 16S rRNA. May interact with the 5'-terminal helix region of 16S rRNA. The protein is Ribosome-binding factor A of Bradyrhizobium diazoefficiens (strain JCM 10833 / BCRC 13528 / IAM 13628 / NBRC 14792 / USDA 110).